Consider the following 615-residue polypeptide: uncharacterized protein (615 aa).

This sequence belongs to the mycobacterial PPE family.

This is an uncharacterized protein from Mycobacterium tuberculosis (strain CDC 1551 / Oshkosh).